The following is a 303-amino-acid chain: MIQILITGLFLLAQPSEPQDSLTVTQQGRTIATVNREDFTMPLPGTPMVDYEKYSKFIKQLDQKVYREPINAVLNDHGSIVPGRVGYKLYQQAFMEKFYAYFYGQGPSKIEVPEMNIYPKVDSELLAHISTQQLGQYVTYFNSSNKSRSHNISLSAKAIDNHVVFPNETFSFNQVVGMRTRNKGYKSAPIIVKGELSEGVGGGICQVSSTLFNAVDRAGLQIVQRYSHTRSVPYVPPGRDATVSWGGPDFRFQNQYNQPILIRAKRYGGSMIITLYSSDVINSRLRKIPKAPSRIPKEINAEQ.

This is an uncharacterized protein from Bacillus subtilis (strain 168).